Reading from the N-terminus, the 276-residue chain is Octanoyltransferase LipM (276 aa).

One can recognise a BPL/LPL catalytic domain in the interval Gly-31–Leu-246. Catalysis depends on Cys-148, which acts as the Acyl-thioester intermediate.

Belongs to the octanoyltransferase LipM family. In terms of assembly, monomer.

The catalysed reaction is octanoyl-[ACP] + L-lysyl-[protein] = N(6)-octanoyl-L-lysyl-[protein] + holo-[ACP] + H(+). Its pathway is protein modification; protein lipoylation via endogenous pathway; protein N(6)-(lipoyl)lysine from octanoyl-[acyl-carrier-protein]. In terms of biological role, catalyzes the transfer of endogenously produced octanoic acid from octanoyl-acyl-carrier-protein onto the lipoyl domain of GcvH, an intermediate carrier during protein lipoylation. The sequence is that of Octanoyltransferase LipM from Lysinibacillus sphaericus (strain C3-41).